The sequence spans 249 residues: Caffeoyl-CoA O-methyltransferase 1 (249 aa).

A substrate-binding site is contributed by Lys23. Residues Thr65, Glu87, 89–90, Ser95, Asp113, and Ala142 contribute to the S-adenosyl-L-methionine site; that span reads GV. Asp165 contributes to the substrate binding site. Residue Asp165 participates in a divalent metal cation binding. Position 167 (Asp167) interacts with S-adenosyl-L-methionine. Positions 191 and 192 each coordinate a divalent metal cation. Asn196 contacts substrate.

This sequence belongs to the class I-like SAM-binding methyltransferase superfamily. Cation-dependent O-methyltransferase family. CCoAMT subfamily. Requires a divalent metal cation as cofactor. As to expression, mostly expressed in petal limbs and tubes, and, at low levels, in flower buds, stamens, pistils, stems, roots and leaves.

It is found in the cytoplasm. The protein resides in the cytosol. The catalysed reaction is (E)-caffeoyl-CoA + S-adenosyl-L-methionine = (E)-feruloyl-CoA + S-adenosyl-L-homocysteine + H(+). It carries out the reaction (E)-5-hydroxyferuloyl-CoA + S-adenosyl-L-methionine = (E)-sinapoyl-CoA + S-adenosyl-L-homocysteine + H(+). Its pathway is aromatic compound metabolism; phenylpropanoid biosynthesis. In terms of biological role, involved in the production of floral volatile phenylpropanoids in flowers of fragrant cultivars (e.g. cv. Mitchell and cv. V26) from cinnamic acid, a common precursor with the anthocyanin biosynthesis pathway involved in flower pigmentation. Methylates caffeoyl-CoA to feruloyl-CoA, also able to methylate 5-hydroxyferuloyl-CoA. This is Caffeoyl-CoA O-methyltransferase 1 from Petunia hybrida (Petunia).